The sequence spans 30 residues: Rothein 3.1 (30 aa).

L30 is subject to Leucine amide.

In terms of tissue distribution, expressed by the skin dorsal glands.

The protein localises to the secreted. Lacks antimicrobial activity. Does not inhibit the formation of NO by neuronal nitric oxide. The polypeptide is Rothein 3.1 (Litoria rothii (Roth's tree frog)).